The sequence spans 302 residues: Single-stranded DNA-binding protein (302 aa).

The tract at residues 3-7 (KRKST) is LAST. Zn(2+)-binding residues include His-65, Cys-78, Cys-88, and Cys-91. The disordered stretch occupies residues 273–302 (TKTEDDFMSSSSGSSSSADDTDLDDLLNDL). Residues 280–290 (MSSSSGSSSSA) are compositionally biased toward low complexity. Acidic residues predominate over residues 291–302 (DDTDLDDLLNDL).

It belongs to the Tequatrovirus single-stranded DNA-binding protein family. In terms of assembly, homodimer in the absence of DNA, monomer when binding DNA. Interacts with the DNA helicase assembly protein; a ternary complex between the helicase assembly protein, the single-stranded DNA-binding protein and ssDNA is an obligatory intermediate in the helicase loading mechanism. Part of the replicase complex that includes the DNA polymerase, the polymerase clamp, the clamp loader complex, the single-stranded DNA binding protein, the primase, the DnaB-like SF4 replicative helicase and the helicase assembly factor. Interacts (via C-terminus) with the viral SF1 dDA helicase. Interacts with the viral SF2 UvsW repair helicase.

Single-stranded DNA-binding protein that participates in viral DNA replication, recombination, and repair. Coats the lagging-strand ssDNA as the replication fork advances. Stimulates the activities of viral DNA polymerase and DnaB-like SF4 replicative helicase, probably via its interaction with the helicase assembly factor. Together with DnaB-like SF4 replicative helicase and the helicase assembly factor, promotes pairing of two homologous DNA molecules containing complementary single-stranded regions and mediates homologous DNA strand exchange. Also promotes the formation of joint molecules. mRNA specific autogenous translational repressor. The chain is Single-stranded DNA-binding protein from Escherichia coli (Bacteriophage T2).